A 310-amino-acid polypeptide reads, in one-letter code: 5-oxoprolinase subunit C (310 aa).

The protein belongs to the PxpC family. Forms a complex composed of PxpA, PxpB and PxpC.

The catalysed reaction is 5-oxo-L-proline + ATP + 2 H2O = L-glutamate + ADP + phosphate + H(+). Catalyzes the cleavage of 5-oxoproline to form L-glutamate coupled to the hydrolysis of ATP to ADP and inorganic phosphate. The sequence is that of 5-oxoprolinase subunit C from Escherichia coli (strain K12).